The sequence spans 1318 residues: DNA-directed RNA polymerase subunit beta' (1318 aa).

Zn(2+)-binding residues include C60, C62, C75, and C78. Mg(2+) is bound by residues D535, D537, and D539. Zn(2+) is bound by residues C890, C967, C974, and C977.

Belongs to the RNA polymerase beta' chain family. As to quaternary structure, the RNAP catalytic core consists of 2 alpha, 1 beta, 1 beta' and 1 omega subunit. When a sigma factor is associated with the core the holoenzyme is formed, which can initiate transcription. Mg(2+) serves as cofactor. Requires Zn(2+) as cofactor.

It catalyses the reaction RNA(n) + a ribonucleoside 5'-triphosphate = RNA(n+1) + diphosphate. DNA-dependent RNA polymerase catalyzes the transcription of DNA into RNA using the four ribonucleoside triphosphates as substrates. This Rhodococcus jostii (strain RHA1) protein is DNA-directed RNA polymerase subunit beta'.